The sequence spans 356 residues: MFSSEGKFRKTYRHQFNQLRTGDETEIPMSTLASRIETRKIPLTNGQIHAIKEAPDELVDIDGFQKIVTSKAAQRSTIKRIMYDMADPIMSDSQKIEVHSYIDSYSWCPPPIFMLLITIIQVGIFFFYWESDGGRSIWTDCAGCFVHHNHTAPGIFIFAPKLRGEAWRFTSYMFLHAGLNHLLGNVIIQLLVGIPLEVAHKIWRIGPIYLLAVTSGSLLQYAIDPNSLLVGASAGVYALIFAHVANVILNWHEMPLRWIRVLVLFVFIFLDFGGAIHRRFYTNDCDSVSHLAHIAGAVTGLFFGYVVLYNVVEHRIEKIIRYVCLFLYSAFFATTIIFVIVRQPYSKNLWNNENCS.

The next 7 helical transmembrane spans lie at 107–129, 172–194, 201–223, 227–249, 256–275, 290–312, and 319–341; these read WCPPPIFMLLITIIQVGIFFFYW, YMFLHAGLNHLLGNVIIQLLVGI, KIWRIGPIYLLAVTSGSLLQYAI, SLLVGASAGVYALIFAHVANVIL, LRWIRVLVLFVFIFLDFGGA, HLAHIAGAVTGLFFGYVVLYNVV, and IIRYVCLFLYSAFFATTIIFVIV. The active-site Nucleophile is the Ser233. His293 is a catalytic residue.

It belongs to the peptidase S54 family.

The protein resides in the membrane. It catalyses the reaction Cleaves type-1 transmembrane domains using a catalytic dyad composed of serine and histidine that are contributed by different transmembrane domains.. Its function is as follows. Serine protease which activates lin-3 isoform a in the proximal vulva precursor cells (VPC) during vulva development to transmit the inductive anchor cell signal to the distal VPCs. This Caenorhabditis elegans protein is Rhomboid-related protein 1.